Consider the following 75-residue polypeptide: Caerin 1.11 (75 aa).

The signal sequence occupies residues 1 to 22; that stretch reads MASLKKSLFLVLFLGFVSVSIC. The propeptide occupies 23 to 49; the sequence is EEEKRQEDEDEHEEEGENQEEGSEEKR. The disordered stretch occupies residues 24 to 48; it reads EEKRQEDEDEHEEEGENQEEGSEEK. Acidic residues predominate over residues 30-45; that stretch reads DEDEHEEEGENQEEGS. The residue at position 74 (Leu74) is a Leucine amide.

It belongs to the frog skin active peptide (FSAP) family. Caerin subfamily. In terms of tissue distribution, expressed by the skin glands.

The protein resides in the secreted. Its subcellular location is the target cell membrane. Its function is as follows. Cationic amphipathic alpha-helical antimicrobial peptide with weak or no activity against both Gram-positive and Gram-negative bacteria. Is weakly active against E.coli (MIC=25 uM), E.cloacae (MIC=50 uM), K.pneumoniae (MIC=25 uM), and S.haemolyticus (MIC=50 uM). Has no activity against S.typhimurium, S.enteritidis, B.megaterium, and S.aureus (MIC&gt;100 uM). This is Caerin 1.11 from Ranoidea caerulea (Green tree frog).